The following is a 153-amino-acid chain: 3-dehydroquinate dehydratase (153 aa).

Tyrosine 26 acts as the Proton acceptor in catalysis. Residues asparagine 77, histidine 83, and aspartate 90 each coordinate substrate. Histidine 103 functions as the Proton donor in the catalytic mechanism. Substrate is bound by residues 104-105 (LS) and arginine 114.

The protein belongs to the type-II 3-dehydroquinase family. Homododecamer.

It carries out the reaction 3-dehydroquinate = 3-dehydroshikimate + H2O. It participates in metabolic intermediate biosynthesis; chorismate biosynthesis; chorismate from D-erythrose 4-phosphate and phosphoenolpyruvate: step 3/7. Functionally, catalyzes a trans-dehydration via an enolate intermediate. The protein is 3-dehydroquinate dehydratase of Colwellia psychrerythraea (strain 34H / ATCC BAA-681) (Vibrio psychroerythus).